The following is a 363-amino-acid chain: NAD(P)H-quinone oxidoreductase subunit 1, chloroplastic (363 aa).

A run of 8 helical transmembrane segments spans residues 30 to 50 (LFPI…IVWL), 98 to 118 (FSIG…VIPF), 127 to 147 (LSIG…GLLM), 165 to 185 (AAQS…ISLL), 203 to 223 (FWGW…ISSL), 248 to 268 (YSGI…LVSS), 300 to 320 (VFGT…FLFI), and 336 to 356 (LLNL…LLTT).

It belongs to the complex I subunit 1 family. As to quaternary structure, NDH is composed of at least 16 different subunits, 5 of which are encoded in the nucleus.

Its subcellular location is the plastid. The protein localises to the chloroplast thylakoid membrane. The enzyme catalyses a plastoquinone + NADH + (n+1) H(+)(in) = a plastoquinol + NAD(+) + n H(+)(out). The catalysed reaction is a plastoquinone + NADPH + (n+1) H(+)(in) = a plastoquinol + NADP(+) + n H(+)(out). In terms of biological role, NDH shuttles electrons from NAD(P)H:plastoquinone, via FMN and iron-sulfur (Fe-S) centers, to quinones in the photosynthetic chain and possibly in a chloroplast respiratory chain. The immediate electron acceptor for the enzyme in this species is believed to be plastoquinone. Couples the redox reaction to proton translocation, and thus conserves the redox energy in a proton gradient. This is NAD(P)H-quinone oxidoreductase subunit 1, chloroplastic from Nicotiana tomentosiformis (Tobacco).